Consider the following 259-residue polypeptide: Ribose-5-phosphate isomerase (259 aa).

It belongs to the ribose 5-phosphate isomerase family.

The protein localises to the cytoplasm. It catalyses the reaction aldehydo-D-ribose 5-phosphate = D-ribulose 5-phosphate. It participates in carbohydrate degradation; pentose phosphate pathway; D-ribose 5-phosphate from D-ribulose 5-phosphate (non-oxidative stage): step 1/1. The protein is Ribose-5-phosphate isomerase (RKI1) of Vanderwaltozyma polyspora (strain ATCC 22028 / DSM 70294 / BCRC 21397 / CBS 2163 / NBRC 10782 / NRRL Y-8283 / UCD 57-17) (Kluyveromyces polysporus).